A 154-amino-acid chain; its full sequence is MVKAVVVLKGESYVHGTVCFTQESENAPVCITGEIKDMDADAKRGMHVHEFGDNTNGCTSAGPHYNPFKKHHGAPTDSERHVGDLGNIQTNSCGAAQLDFSDKIISLYGPHSIIGRSLVVHASTDDLGKGGNEESLKTGNAGARLACGVIGIST.

Cu cation contacts are provided by histidine 47, histidine 49, and histidine 64. A disulfide bridge links cysteine 58 with cysteine 147. Zn(2+) is bound by residues histidine 64, histidine 72, histidine 81, and aspartate 84. Residue histidine 121 coordinates Cu cation. Arginine 144 lines the substrate pocket.

This sequence belongs to the Cu-Zn superoxide dismutase family. As to quaternary structure, homodimer. Cu cation is required as a cofactor. Requires Zn(2+) as cofactor.

The protein localises to the cytoplasm. It is found in the mitochondrion. The protein resides in the cell membrane. The catalysed reaction is 2 superoxide + 2 H(+) = H2O2 + O2. In terms of biological role, destroys radicals which are normally produced within the cells and which are toxic to biological systems. Destroys radicals produced by host defense mechanisms. This chain is Superoxide dismutase [Cu-Zn], found in Cryptococcus neoformans var. grubii serotype A (strain H99 / ATCC 208821 / CBS 10515 / FGSC 9487) (Filobasidiella neoformans var. grubii).